A 131-amino-acid chain; its full sequence is Large ribosomal subunit protein bL19 (131 aa).

The interval 110 to 131 (KSARIAERTDDRAKKAKATAAE) is disordered. Positions 113 to 122 (RIAERTDDRA) are enriched in basic and acidic residues.

Belongs to the bacterial ribosomal protein bL19 family.

This protein is located at the 30S-50S ribosomal subunit interface and may play a role in the structure and function of the aminoacyl-tRNA binding site. The polypeptide is Large ribosomal subunit protein bL19 (Azorhizobium caulinodans (strain ATCC 43989 / DSM 5975 / JCM 20966 / LMG 6465 / NBRC 14845 / NCIMB 13405 / ORS 571)).